The following is a 275-amino-acid chain: Small ribosomal subunit protein uS3 (275 aa).

The KH type-2 domain occupies 38–106 (IRRLLSSGLE…QVQLNILEVK (69 aa)). Residues 217–275 (AVPAGADRPRRERPAGSRPRRSGASGTTATGTEAGRAVGSEEPAAAESATTPEAQSTES) are disordered. Low complexity predominate over residues 238–275 (SGASGTTATGTEAGRAVGSEEPAAAESATTPEAQSTES).

The protein belongs to the universal ribosomal protein uS3 family. In terms of assembly, part of the 30S ribosomal subunit. Forms a tight complex with proteins S10 and S14.

Functionally, binds the lower part of the 30S subunit head. Binds mRNA in the 70S ribosome, positioning it for translation. The chain is Small ribosomal subunit protein uS3 from Mycobacterium marinum (strain ATCC BAA-535 / M).